The primary structure comprises 483 residues: Cysteine--tRNA ligase (483 aa).

Residue C28 participates in Zn(2+) binding. The 'HIGH' region motif lies at 30–40 (MTVYDYCHLGH). 3 residues coordinate Zn(2+): C212, H237, and E241. A 'KMSKS' region motif is present at residues 269 to 273 (KMSKS). K272 serves as a coordination point for ATP.

The protein belongs to the class-I aminoacyl-tRNA synthetase family. As to quaternary structure, monomer. Zn(2+) is required as a cofactor.

It is found in the cytoplasm. It carries out the reaction tRNA(Cys) + L-cysteine + ATP = L-cysteinyl-tRNA(Cys) + AMP + diphosphate. In Bordetella avium (strain 197N), this protein is Cysteine--tRNA ligase.